The following is a 528-amino-acid chain: GMP synthase [glutamine-hydrolyzing] (528 aa).

The Glutamine amidotransferase type-1 domain occupies 13 to 204; sequence AIVILDFGSQ…VYHICGCEPD (192 aa). The active-site Nucleophile is the Cys-90. Active-site residues include His-178 and Glu-180. The region spanning 205–403 is the GMPS ATP-PPase domain; it reads WTTEAFIDEA…LGLPEEIVSR (199 aa). 232–238 provides a ligand contact to ATP; that stretch reads SGGVDSS.

In terms of assembly, homodimer.

The enzyme catalyses XMP + L-glutamine + ATP + H2O = GMP + L-glutamate + AMP + diphosphate + 2 H(+). Its pathway is purine metabolism; GMP biosynthesis; GMP from XMP (L-Gln route): step 1/1. Functionally, catalyzes the synthesis of GMP from XMP. This chain is GMP synthase [glutamine-hydrolyzing], found in Synechococcus sp. (strain CC9311).